The following is a 216-amino-acid chain: Sarcospan (216 aa).

The Cytoplasmic portion of the chain corresponds to 1 to 26 (MGRKPSPRAQELPEEEARTCCGCRFP). Residues 27–47 (LLLALLQLALGIAVTVLGFLM) traverse the membrane as a helical segment. The Extracellular segment spans residues 48–59 (ASISPSLLVRDT). The chain crosses the membrane as a helical span at residues 60–80 (PFWAGSIVCVVAYLGLFMLCV). Residues 81 to 95 (SYQVDERTCVQFSMK) lie on the Cytoplasmic side of the membrane. The chain crosses the membrane as a helical span at residues 96–116 (VFYFLLSALGLMVCMLAVAFA). Residues 117–166 (AHHYSLLAQFTCETSLDSCQCKLPSSEPLSRAFVYRDVTDCTSVTGTFKL) are Extracellular-facing. A helical transmembrane segment spans residues 167–187 (FLIIQMVLNLVCGLVCLLACF). Residues 188–216 (VMWKHRYQVFYVGVGLRSLMASDGQLPKA) are Cytoplasmic-facing.

It is found in the cell membrane. Its subcellular location is the sarcolemma. The protein localises to the postsynaptic cell membrane. In terms of biological role, component of the dystrophin-glycoprotein complex (DGC), a complex that spans the muscle plasma membrane and forms a link between the F-actin cytoskeleton and the extracellular matrix. Preferentially associates with the sarcoglycan subcomplex of the DGC. This Mus musculus (Mouse) protein is Sarcospan (Sspn).